The chain runs to 180 residues: dCTP deaminase (180 aa).

DCTP contacts are provided by residues 101 to 106 and Asp117; that span reads KSSFAR. Catalysis depends on Glu127, which acts as the Proton donor/acceptor. Residues Tyr159 and Gln168 each contribute to the dCTP site.

Belongs to the dCTP deaminase family. As to quaternary structure, homotrimer.

It carries out the reaction dCTP + H2O + H(+) = dUTP + NH4(+). It functions in the pathway pyrimidine metabolism; dUMP biosynthesis; dUMP from dCTP (dUTP route): step 1/2. In terms of biological role, catalyzes the deamination of dCTP to dUTP. This chain is dCTP deaminase, found in Ignicoccus hospitalis (strain KIN4/I / DSM 18386 / JCM 14125).